Reading from the N-terminus, the 483-residue chain is Phloretin 2'-O-glucosyltransferase (483 aa).

Catalysis depends on H15, which acts as the Proton acceptor. H15 provides a ligand contact to an anthocyanidin. Catalysis depends on D118, which acts as the Charge relay. The UDP-alpha-D-glucose site is built by T140, A360, Q362, H377, W380, N381, S382, and E385. A400 contacts an anthocyanidin. UDP-alpha-D-glucose is bound by residues E401 and Q402.

The protein belongs to the UDP-glycosyltransferase family.

The catalysed reaction is phloretin + UDP-alpha-D-glucose = phlorizin + UDP + H(+). Functionally, glycosyltransferase that possesses phloretin 2'-O-glycosyltransferase activity. Converts phloretin to phlorizin (phloretin 2'-O-glucoside), a potent antioxidant. Is specific for phloretin and does not possess glycosyltransferase activity toward caffeic acid, catechin, chlorogenic acid, 2-coumaric acid, 3-coumaric acid, 4-coumaric acid, cyanidin, 3,4-dihydroxyhydrocinnamic acid, epicatechin, 3-hydroxybenzoic acid, naringenin, 3,4-dihydroxybenzoic acid, quercetin and rutin. Can glycosylate phloretin in the presence of UDP-glucose, UDP-xylose and UDP-galactose. In Malus domestica (Apple), this protein is Phloretin 2'-O-glucosyltransferase.